The primary structure comprises 501 residues: MNDIAAGTEQRSALPPELRRVHMVGIGGAGMSGIARILLSRGGEVSGSDAKESRGVLALRARGAQVRIGHDAGALDLLPGGPTAVVTTYAAIPKTNPELVEAQRRDIPVLLRPAVLASLMRGHRTLLVSGTHGKTSTTSMLIVALQHCGFDPSFAVGGELNEAGTNAHHGTGEIFVAEADESDGSLLQYDPDVAVVTNIESDHLDFFGSDAAYTQVFDDFADRLAAGGLLVVCLDDPGSRALAERVGPRLAERGVRVLGYGSGELADAPVPVGVRLHSWEPRDVGGVAQFQLGDEPAPRTLRLSVPGRHMALNALAALLAARAAGADLDEIIQGLEGFGGVHRRFQFVGRENGVRVFDDYAHHPTEVRAVLGAAAALVEQEARDGARSRQGRVIVVFQPHLYSRTATFATEFGAALSLADEVVVLDVYGAREKAMPGVNGALVAQAVTAPVHYQPDMSRVGRQVAGLALPGDVVITMGAGDVTMLGSQILDGLRARPQHGR.

Residue Gly130–Ser136 participates in ATP binding.

The protein belongs to the MurCDEF family.

The protein localises to the cytoplasm. The catalysed reaction is UDP-N-acetyl-alpha-D-muramate + L-alanine + ATP = UDP-N-acetyl-alpha-D-muramoyl-L-alanine + ADP + phosphate + H(+). It functions in the pathway cell wall biogenesis; peptidoglycan biosynthesis. Functionally, cell wall formation. This chain is UDP-N-acetylmuramate--L-alanine ligase, found in Nocardia farcinica (strain IFM 10152).